The following is a 247-amino-acid chain: Geranylgeranylglyceryl phosphate synthase (247 aa).

The Mg(2+) site is built by Asp-23 and Ser-52. Sn-glycerol 1-phosphate contacts are provided by residues 171 to 177 (YLEAGSG), 203 to 204 (GG), and 225 to 226 (GT).

Belongs to the GGGP/HepGP synthase family. Group II subfamily. Mg(2+) serves as cofactor.

The protein localises to the cytoplasm. It carries out the reaction sn-glycerol 1-phosphate + (2E,6E,10E)-geranylgeranyl diphosphate = sn-3-O-(geranylgeranyl)glycerol 1-phosphate + diphosphate. It functions in the pathway membrane lipid metabolism; glycerophospholipid metabolism. Functionally, prenyltransferase that catalyzes the transfer of the geranylgeranyl moiety of geranylgeranyl diphosphate (GGPP) to the C3 hydroxyl of sn-glycerol-1-phosphate (G1P). This reaction is the first ether-bond-formation step in the biosynthesis of archaeal membrane lipids. This is Geranylgeranylglyceryl phosphate synthase from Methanococcoides burtonii (strain DSM 6242 / NBRC 107633 / OCM 468 / ACE-M).